The sequence spans 503 residues: uncharacterized protein (503 aa).

Disordered regions lie at residues 1 to 26 and 132 to 156; these read MADD…SPTT and DQQQ…DNSM. The segment covering 16–26 has biased composition (low complexity); it reads AQSSVPTSPTT. Positions 147-156 are enriched in polar residues; sequence TPNSVDDNSM.

This is an uncharacterized protein from Caenorhabditis elegans.